Here is a 335-residue protein sequence, read N- to C-terminus: MQDPVSGFIYPEEWISLCTDETERLLVSQGLAVLTSDGTIRRRGFTTGSSASAAAKASVLSLTKTGFDEVSILTPAGIRVQIPVTIARGTGECRKYSGDYPGDVTAGLVFTAEATPADSGTTLVFGEGIGRWSRDTPRYKTGDPAVSCQAMDEIKNAIEEAVQETGIPGVSVRIFAREGRIVAEKTLNQMVGVVGGISVLGTTGFVEPWDDHLEQTVCDRAVHAERVVLTTGRIGMRYARMLFPDHEVILAGSRLGTIIPHLTGEVIICGLPALVLKYINPVILEGTGFSTVEEFMTNDRFLPAMQTSFQIYKSAHPNVRIVVVNREGAIIGDSQ.

The protein belongs to the CbiD family.

It catalyses the reaction Co-precorrin-5B + S-adenosyl-L-methionine = Co-precorrin-6A + S-adenosyl-L-homocysteine. It participates in cofactor biosynthesis; adenosylcobalamin biosynthesis; cob(II)yrinate a,c-diamide from sirohydrochlorin (anaerobic route): step 6/10. Catalyzes the methylation of C-1 in cobalt-precorrin-5B to form cobalt-precorrin-6A. This is Cobalt-precorrin-5B C(1)-methyltransferase from Methanospirillum hungatei JF-1 (strain ATCC 27890 / DSM 864 / NBRC 100397 / JF-1).